Consider the following 138-residue polypeptide: uncharacterized protein (138 aa).

The tract at residues 1-27 (MEGELIENNGLDIYDTSETPKKRGRPA) is disordered.

This is an uncharacterized protein from Escherichia coli (strain K12).